Consider the following 73-residue polypeptide: Large ribosomal subunit protein bL31 (73 aa).

The Zn(2+) site is built by Cys16, Cys18, Cys37, and Cys40.

It belongs to the bacterial ribosomal protein bL31 family. Type A subfamily. In terms of assembly, part of the 50S ribosomal subunit. Zn(2+) serves as cofactor.

Functionally, binds the 23S rRNA. This chain is Large ribosomal subunit protein bL31, found in Marinobacter nauticus (strain ATCC 700491 / DSM 11845 / VT8) (Marinobacter aquaeolei).